Consider the following 544-residue polypeptide: Probable protein kinase UbiB (544 aa).

In terms of domain architecture, Protein kinase spans 123-501 (DFDLVPLASA…KRQQATGKFL (379 aa)). Residues 129–137 (LASASIAQV) and K152 each bind ATP. D287 functions as the Proton acceptor in the catalytic mechanism. 2 helical membrane passes run 496-516 (ATGK…AILV) and 519-539 (TYEQ…LFSW).

It belongs to the ABC1 family. UbiB subfamily.

It is found in the cell inner membrane. It participates in cofactor biosynthesis; ubiquinone biosynthesis [regulation]. Is probably a protein kinase regulator of UbiI activity which is involved in aerobic coenzyme Q (ubiquinone) biosynthesis. In Vibrio vulnificus (strain CMCP6), this protein is Probable protein kinase UbiB.